The chain runs to 403 residues: Argininosuccinate synthase (403 aa).

Residues 13–21 (AYSGGLDTS) and alanine 40 contribute to the ATP site. Tyrosine 92 and serine 97 together coordinate L-citrulline. Glycine 122 contacts ATP. 3 residues coordinate L-aspartate: threonine 124, asparagine 128, and aspartate 129. Asparagine 128 contacts L-citrulline. Residues arginine 132, serine 181, serine 190, glutamate 266, and tyrosine 278 each coordinate L-citrulline.

Belongs to the argininosuccinate synthase family. Type 1 subfamily. In terms of assembly, homotetramer.

Its subcellular location is the cytoplasm. The enzyme catalyses L-citrulline + L-aspartate + ATP = 2-(N(omega)-L-arginino)succinate + AMP + diphosphate + H(+). It participates in amino-acid biosynthesis; L-arginine biosynthesis; L-arginine from L-ornithine and carbamoyl phosphate: step 2/3. In Aliivibrio salmonicida (strain LFI1238) (Vibrio salmonicida (strain LFI1238)), this protein is Argininosuccinate synthase.